Here is a 395-residue protein sequence, read N- to C-terminus: Elongation factor Tu (395 aa).

Residues 10-205 enclose the tr-type G domain; sequence KPHVNVGTIG…VDNDIPIPPR (196 aa). The interval 19–26 is G1; sequence GHVDHGKT. Residue 19-26 coordinates GTP; that stretch reads GHVDHGKT. Thr-26 contacts Mg(2+). Residues 60-64 form a G2 region; sequence GITIN. The interval 81-84 is G3; the sequence is DCPG. GTP is bound by residues 81-85 and 136-139; these read DCPGH and NKVD. Residues 136-139 are G4; the sequence is NKVD. Residues 174–176 are G5; sequence SAL.

Belongs to the TRAFAC class translation factor GTPase superfamily. Classic translation factor GTPase family. EF-Tu/EF-1A subfamily. In terms of assembly, monomer.

The protein localises to the cytoplasm. The catalysed reaction is GTP + H2O = GDP + phosphate + H(+). Its function is as follows. GTP hydrolase that promotes the GTP-dependent binding of aminoacyl-tRNA to the A-site of ribosomes during protein biosynthesis. This Cytophaga hutchinsonii (strain ATCC 33406 / DSM 1761 / CIP 103989 / NBRC 15051 / NCIMB 9469 / D465) protein is Elongation factor Tu.